Reading from the N-terminus, the 223-residue chain is Probable glutathione S-transferase (223 aa).

The GST N-terminal domain occupies A2–S81. Glutathione contacts are provided by residues S12, K39, V53, and E65–S66. Residues D86–F212 enclose the GST C-terminal domain.

It belongs to the GST superfamily. HSP26 family. Root tip-specific expression.

It carries out the reaction RX + glutathione = an S-substituted glutathione + a halide anion + H(+). This is Probable glutathione S-transferase from Nicotiana tabacum (Common tobacco).